The chain runs to 225 residues: Urease accessory protein UreE (225 aa).

Positions histidine 171–glycine 215 are enriched in basic and acidic residues. Positions histidine 171–arginine 225 are disordered. Residues histidine 216–arginine 225 show a composition bias toward basic residues.

This sequence belongs to the UreE family.

It is found in the cytoplasm. Involved in urease metallocenter assembly. Binds nickel. Probably functions as a nickel donor during metallocenter assembly. This is Urease accessory protein UreE from Paraburkholderia xenovorans (strain LB400).